The sequence spans 375 residues: Beta-1,3-N-acetylglucosaminyltransferase lunatic fringe (375 aa).

The Cytoplasmic segment spans residues 1 to 8 (MLKNWGKK). A helical; Signal-anchor for type II membrane protein transmembrane segment spans residues 9 to 29 (LLLSIVGATLTCLLVLVVDQQ). The Lumenal segment spans residues 30 to 375 (SRHMLETQSD…TPWCPWKAAY (346 aa)). Residues 53–73 (DLDPANPGDGGDPANSAQDSG) form a disordered region. Arg-125 lines the substrate pocket. Residue Asn-163 is glycosylated (N-linked (GlcNAc...) asparagine). 2 disulfide bridges follow: Cys-164-Cys-175 and Cys-193-Cys-256. Substrate is bound at residue Asp-197. Asp-198 lines the Mn(2+) pocket. Residue Asp-286 is part of the active site. His-310 provides a ligand contact to Mn(2+). An intrachain disulfide couples Cys-360 to Cys-369.

It belongs to the glycosyltransferase 31 family. The cofactor is Mn(2+). Requires Co(2+) as cofactor. In terms of processing, a soluble form may be derived from the membrane form by proteolytic processing. Detected in the neural tube, the eye and the otic vesicle, expression coincides with the region that produces the medial, intermediate and lateral neurons.

It localises to the golgi apparatus membrane. It catalyses the reaction 3-O-(alpha-L-fucosyl)-L-threonyl-[EGF-like domain protein] + UDP-N-acetyl-alpha-D-glucosamine = 3-O-(N-acetyl-beta-D-glucosaminyl-(1-&gt;3)-alpha-L-fucosyl)-L-threonyl-[EGF-like domain protein] + UDP + H(+). The enzyme catalyses 3-O-(alpha-L-fucosyl)-L-seryl-[EGF-like domain protein] + UDP-N-acetyl-alpha-D-glucosamine = 3-O-(N-acetyl-beta-D-glucosaminyl-(1-&gt;3)-alpha-L-fucosyl)-L-seryl-[EGF-like domain protein] + UDP + H(+). Glycosyltransferase that initiates the elongation of O-linked fucose residues attached to EGF-like repeats in the extracellular domain of Notch molecules. Essential mediator of somite segmentation and patterning. May be involved in mesoderm development. The polypeptide is Beta-1,3-N-acetylglucosaminyltransferase lunatic fringe (lfng) (Xenopus laevis (African clawed frog)).